Here is a 711-residue protein sequence, read N- to C-terminus: MNNPLVNQAAMVLPVFLLSACLGGGGSFDLDSVDTEAPRPAPKYQDVSSEKPQAQKDQGGYGFAMRLKRRNWYPGAEESEVKLNESDWEATGLPTKPKELPKRQKSVIEKVETDGDSDIYSSPYLTPSNHQNGSAGNGVNQPKNQATGHENFQYVYSGWFYKHAASEKDFSNKKIKSGDDGYIFYHGEKPSRQLPASGKVIYKGVWHFVTDTKKGQDFREIIQPSKKQGDRYSGFSGDGSEEYSNKNESTLKDDHEGYGFTSNLEVDFGNKKLTGKLIRNNASLNNNTNNDKHTTQYYSLDAQITGNRFNGTATATDKKENETKLHPFVSDSSSLSGGFFGPQGEELGFRFLSDDQKVAVVGSAKTKDKLENGAAASGSTGAAASGGAAGTSSENSKLTTVLDAVELTLNDKKIKNLDNFSNAAQLVVDGIMIPLLPKDSESGNTQADKGKNGGTEFTRKFEHTPESDKKDAQAGTQTNGAQTASNTAGDTNGKTKTYEVEVCCSNLNYLKYGMLTRKNSKSAMQAGGNSSQADAKTEQVEQSMFLQGERTDEKEIPTDQNVVYRGSWYGHIANGTSWSGNASDKEGGNRAEFTVNFADKKITGKLTAENRQAQTFTIEGMIQGNGFEGTAKTAESGFDLDQKNTTRTPKAYITDAKVKGGFYGPKAEELGGWFAYPGDKQTEKATATSSDGNSASSATVVFGAKRQQPVQ.

Positions 1 to 20 (MNNPLVNQAAMVLPVFLLSA) are cleaved as a signal peptide. Cys-21 carries N-palmitoyl cysteine lipidation. Cys-21 is lipidated: S-diacylglycerol cysteine. Disordered regions lie at residues 33–58 (VDTE…QKDQ), 79–105 (SEVK…KRQK), 118–146 (DIYS…KNQA), 225–251 (SKKQ…ESTL), 370–396 (LENG…SENS), 437–492 (PKDS…GDTN), and 682–711 (TEKA…QPVQ). Positions 46-56 (DVSSEKPQAQK) are enriched in polar residues. Over residues 96–105 (KPKELPKRQK) the composition is skewed to basic and acidic residues. Over residues 119–146 (IYSSPYLTPSNHQNGSAGNGVNQPKNQA) the composition is skewed to polar residues. Low complexity predominate over residues 373–393 (GAAASGSTGAAASGGAAGTSS). The segment covering 457–472 (FTRKFEHTPESDKKDA) has biased composition (basic and acidic residues). 2 stretches are compositionally biased toward polar residues: residues 474-492 (AGTQ…GDTN) and 684-699 (KATA…SSAT).

Belongs to the TbpB family. Isotype II subfamily. In terms of assembly, binds only human holo-transferrin (TF), via the TF C-terminus. Forms a large complex with TbpA and TF. Interacts via its C-terminal domain with Slam1.

The protein resides in the cell outer membrane. Its subcellular location is the cell surface. In terms of biological role, neisseria acquires iron by extracting it from serum transferrin (TF) in its human host. Acts as a TF receptor and is required for TF utilization. Involved in the initial capture of TF. Helps select only those TF molecules that can be used as an iron source and concentrates them on the cell surface, maintaining the iron-loaded status of the TF C-terminal lobe until its delivery to TbpA. This Neisseria meningitidis serogroup B protein is Transferrin-binding protein B (tbpB).